The following is a 603-amino-acid chain: Aspartate--tRNA(Asp/Asn) ligase (603 aa).

The segment at 205–208 is aspartate; that stretch reads QLFK. Residue R227 coordinates L-aspartate. ATP is bound by residues 227–229 and Q236; that span reads RDE. Residue H463 coordinates L-aspartate. E497 contributes to the ATP binding site. R504 serves as a coordination point for L-aspartate. 549-552 is an ATP binding site; that stretch reads GMDR.

This sequence belongs to the class-II aminoacyl-tRNA synthetase family. Type 1 subfamily. In terms of assembly, homodimer.

The protein resides in the cytoplasm. The enzyme catalyses tRNA(Asx) + L-aspartate + ATP = L-aspartyl-tRNA(Asx) + AMP + diphosphate. Functionally, aspartyl-tRNA synthetase with relaxed tRNA specificity since it is able to aspartylate not only its cognate tRNA(Asp) but also tRNA(Asn). Reaction proceeds in two steps: L-aspartate is first activated by ATP to form Asp-AMP and then transferred to the acceptor end of tRNA(Asp/Asn). In Anaeromyxobacter sp. (strain K), this protein is Aspartate--tRNA(Asp/Asn) ligase.